Consider the following 656-residue polypeptide: Translation factor GUF1 homolog, mitochondrial (656 aa).

Positions 55-236 (QRIRNFSIIA…EIVRRLPPPD (182 aa)) constitute a tr-type G domain. Residues 64–71 (AHVDHGKS), 129–133 (DTPGH), and 183–186 (NKID) each bind GTP.

The protein belongs to the TRAFAC class translation factor GTPase superfamily. Classic translation factor GTPase family. LepA subfamily.

Its subcellular location is the mitochondrion inner membrane. The enzyme catalyses GTP + H2O = GDP + phosphate + H(+). Its function is as follows. Promotes mitochondrial protein synthesis. May act as a fidelity factor of the translation reaction, by catalyzing a one-codon backward translocation of tRNAs on improperly translocated ribosomes. Binds to mitochondrial ribosomes in a GTP-dependent manner. The chain is Translation factor GUF1 homolog, mitochondrial from Aedes aegypti (Yellowfever mosquito).